Here is a 497-residue protein sequence, read N- to C-terminus: Probable cytosol aminopeptidase (497 aa).

Mn(2+)-binding residues include K262 and D267. The active site involves K274. D285, D344, and E346 together coordinate Mn(2+). Residue R348 is part of the active site.

This sequence belongs to the peptidase M17 family. Requires Mn(2+) as cofactor.

The protein localises to the cytoplasm. The enzyme catalyses Release of an N-terminal amino acid, Xaa-|-Yaa-, in which Xaa is preferably Leu, but may be other amino acids including Pro although not Arg or Lys, and Yaa may be Pro. Amino acid amides and methyl esters are also readily hydrolyzed, but rates on arylamides are exceedingly low.. It catalyses the reaction Release of an N-terminal amino acid, preferentially leucine, but not glutamic or aspartic acids.. In terms of biological role, presumably involved in the processing and regular turnover of intracellular proteins. Catalyzes the removal of unsubstituted N-terminal amino acids from various peptides. The sequence is that of Probable cytosol aminopeptidase from Rhizobium etli (strain ATCC 51251 / DSM 11541 / JCM 21823 / NBRC 15573 / CFN 42).